Here is a 108-residue protein sequence, read N- to C-terminus: FK506-binding protein 1A (108 aa).

The tract at residues 1 to 20 (MGVEVQRISPGDGKNFPKPG) is disordered. The PPIase FKBP-type domain occupies 20–108 (GDTVSIHYTG…TFEVELLKIN (89 aa)).

This sequence belongs to the FKBP-type PPIase family. FKBP1 subfamily.

The protein resides in the cytoplasm. The catalysed reaction is [protein]-peptidylproline (omega=180) = [protein]-peptidylproline (omega=0). With respect to regulation, inhibited by both FK506 and rapamycin. In terms of biological role, PPIases accelerate the folding of proteins. It catalyzes the cis-trans isomerization of proline imidic peptide bonds in oligopeptides. The sequence is that of FK506-binding protein 1A (fprA) from Emericella nidulans (strain FGSC A4 / ATCC 38163 / CBS 112.46 / NRRL 194 / M139) (Aspergillus nidulans).